Consider the following 79-residue polypeptide: MDILKKSLFLVLFLGLVSLSICEEEKRENEDEEKQEDDEQSEMKRALWKTMLKKLGTVALHAGKAALGAAADTISQGAQ.

A signal peptide spans 1-22 (MDILKKSLFLVLFLGLVSLSIC). Residues 23 to 45 (EEEKRENEDEEKQEDDEQSEMKR) constitute a propeptide that is removed on maturation. The residue at position 76 (Gln-76) is a Glutamine amide. Residues 78 to 79 (AQ) constitute a propeptide that is removed on maturation.

The protein belongs to the frog skin active peptide (FSAP) family. Dermaseptin subfamily. In terms of tissue distribution, expressed by the skin glands.

It localises to the secreted. Functionally, potent antimicrobial peptide with activity against bacteria, fungi and protozoa. Probably acts by disturbing membrane functions with its amphipathic structure. The sequence is that of Dermaseptin-S8 from Phyllomedusa sauvagei (Sauvage's leaf frog).